A 400-amino-acid polypeptide reads, in one-letter code: Spermatogenic leucine zipper protein 1 (400 aa).

Residues 1 to 27 are disordered; that stretch reads MADSDSSSEMPAHSPSPSPIPCAKQKP. Serine 106 is subject to Phosphoserine. Residues 116 to 127 form a helix-loop-helix motif region; it reads RNKLRFKDDLFI. The interval 128 to 193 is basic motif; that stretch reads HFDPERENTM…HIRGEYRKLR (66 aa). Coiled coils occupy residues 182-231 and 268-293; these read SVHI…KDIV and LIAA…LHLH. Serine 207 carries the post-translational modification Phosphoserine. The tract at residues 252–273 is leucine-zipper; that stretch reads LEEQVKKLSQDTHSLHLIAALL. The interval 295–332 is disordered; it reads AGPGHEKPLQTSGEQDKKCGEQDKKCGEQDKKCGEQDK.

In terms of assembly, interacts with PPP1CC isoform gamma-2. Post-translationally, phosphorylated by MAPK1/ERK2 and MAPK3/ERK1.

It localises to the cytoplasm. The protein resides in the nucleus. Its function is as follows. Transcription factor that binds to the DNA sequence 5'-CANNTG-3'(E box) and the G-box motif. May play an important role in the regulation of cell proliferation and differentiation during spermatogenesis. In Rattus norvegicus (Rat), this protein is Spermatogenic leucine zipper protein 1 (Spz1).